A 222-amino-acid chain; its full sequence is Leucyl/phenylalanyl-tRNA--protein transferase (222 aa).

The protein belongs to the L/F-transferase family.

The protein resides in the cytoplasm. The enzyme catalyses N-terminal L-lysyl-[protein] + L-leucyl-tRNA(Leu) = N-terminal L-leucyl-L-lysyl-[protein] + tRNA(Leu) + H(+). It carries out the reaction N-terminal L-arginyl-[protein] + L-leucyl-tRNA(Leu) = N-terminal L-leucyl-L-arginyl-[protein] + tRNA(Leu) + H(+). It catalyses the reaction L-phenylalanyl-tRNA(Phe) + an N-terminal L-alpha-aminoacyl-[protein] = an N-terminal L-phenylalanyl-L-alpha-aminoacyl-[protein] + tRNA(Phe). Functionally, functions in the N-end rule pathway of protein degradation where it conjugates Leu, Phe and, less efficiently, Met from aminoacyl-tRNAs to the N-termini of proteins containing an N-terminal arginine or lysine. In Legionella pneumophila (strain Corby), this protein is Leucyl/phenylalanyl-tRNA--protein transferase.